Consider the following 215-residue polypeptide: MSSIAAWGDGRRTRIGVLGGSFNPVHDGHLQLARRALRHLRLDQVWLMISPGYPLKPVQGMAPFDVRLASVAARFDGRRLVATDIERRLGTRYTVDTLGLLRLRFPHAAFVWLMGADGLADLARWRDWRRIVSLVPFAVLPRPTYNPGALRGEAAVALARWRRPARQAPILADCAPCAWAFLPAPQIGISATELRASALRQRSRHPTHKHTTHQE.

Belongs to the NadD family.

It catalyses the reaction nicotinate beta-D-ribonucleotide + ATP + H(+) = deamido-NAD(+) + diphosphate. The protein operates within cofactor biosynthesis; NAD(+) biosynthesis; deamido-NAD(+) from nicotinate D-ribonucleotide: step 1/1. Its function is as follows. Catalyzes the reversible adenylation of nicotinate mononucleotide (NaMN) to nicotinic acid adenine dinucleotide (NaAD). This Gluconacetobacter diazotrophicus (strain ATCC 49037 / DSM 5601 / CCUG 37298 / CIP 103539 / LMG 7603 / PAl5) protein is Probable nicotinate-nucleotide adenylyltransferase.